Consider the following 343-residue polypeptide: Phosphate acyltransferase (343 aa).

The protein belongs to the PlsX family. As to quaternary structure, homodimer. Probably interacts with PlsY.

It localises to the cytoplasm. It carries out the reaction a fatty acyl-[ACP] + phosphate = an acyl phosphate + holo-[ACP]. It participates in lipid metabolism; phospholipid metabolism. Functionally, catalyzes the reversible formation of acyl-phosphate (acyl-PO(4)) from acyl-[acyl-carrier-protein] (acyl-ACP). This enzyme utilizes acyl-ACP as fatty acyl donor, but not acyl-CoA. The sequence is that of Phosphate acyltransferase from Coxiella burnetii (strain RSA 331 / Henzerling II).